The primary structure comprises 443 residues: GTPase Der (443 aa).

EngA-type G domains follow at residues 3-167 (PVIA…PEEK) and 176-349 (IKIA…QSIQ). GTP is bound by residues 9 to 16 (GRPNVGKS), 56 to 60 (DTGGL), 119 to 122 (NKAD), 182 to 189 (GRPNVGKS), 229 to 233 (DTAGI), and 294 to 297 (NKWD). One can recognise a KH-like domain in the interval 350–434 (QELTTGQLTR…PVHIKLKTDP (85 aa)).

This sequence belongs to the TRAFAC class TrmE-Era-EngA-EngB-Septin-like GTPase superfamily. EngA (Der) GTPase family. Associates with the 50S ribosomal subunit.

GTPase that plays an essential role in the late steps of ribosome biogenesis. This is GTPase Der from Coxiella burnetii (strain CbuK_Q154) (Coxiella burnetii (strain Q154)).